The sequence spans 151 residues: uncharacterized protein (151 aa).

4Fe-4S ferredoxin-type domains lie at Lys4–Val32, Arg33–Asp63, and Gly64–Arg93. 16 residues coordinate [4Fe-4S] cluster: Cys13, Cys16, Cys19, Cys23, Cys42, Cys45, Cys50, Cys54, Cys73, Cys76, Cys79, Cys83, Cys98, Cys101, Cys111, and Cys115.

The cofactor is [4Fe-4S] cluster.

This is an uncharacterized protein from Methanocaldococcus jannaschii (strain ATCC 43067 / DSM 2661 / JAL-1 / JCM 10045 / NBRC 100440) (Methanococcus jannaschii).